We begin with the raw amino-acid sequence, 199 residues long: MRQATVTRATKETEITVWLDLDGTGQYEVSTGIGFLDHMLEQVSRHSLMDLRVHAKGDTHIDFHHTTEDTGLAIGQAVTQALGDRKGIQRYGSALIPMDEALTQVAVDLSNRPYLIWKVDFSRDKLGDMDTELFKEWFQAFSQTAGVTLHVANHYGENNHHIVESCYKALARALRQAWEIDPRKADAVPSTKGVLGGTL.

This sequence belongs to the imidazoleglycerol-phosphate dehydratase family.

The protein resides in the cytoplasm. The catalysed reaction is D-erythro-1-(imidazol-4-yl)glycerol 3-phosphate = 3-(imidazol-4-yl)-2-oxopropyl phosphate + H2O. The protein operates within amino-acid biosynthesis; L-histidine biosynthesis; L-histidine from 5-phospho-alpha-D-ribose 1-diphosphate: step 6/9. The polypeptide is Imidazoleglycerol-phosphate dehydratase (Rhodospirillum rubrum (strain ATCC 11170 / ATH 1.1.1 / DSM 467 / LMG 4362 / NCIMB 8255 / S1)).